We begin with the raw amino-acid sequence, 330 residues long: tRNA-modifying protein YgfZ (330 aa).

Folate is bound by residues Trp28 and Trp190.

It belongs to the tRNA-modifying YgfZ family.

The protein resides in the cytoplasm. Functionally, folate-binding protein involved in regulating the level of ATP-DnaA and in the modification of some tRNAs. It is probably a key factor in regulatory networks that act via tRNA modification, such as initiation of chromosomal replication. The sequence is that of tRNA-modifying protein YgfZ from Yersinia pseudotuberculosis serotype O:1b (strain IP 31758).